Here is a 284-residue protein sequence, read N- to C-terminus: Pantothenate synthetase (284 aa).

Met32–His39 provides a ligand contact to ATP. Residue His39 is the Proton donor of the active site. (R)-pantoate is bound at residue Gln63. Gln63 provides a ligand contact to beta-alanine. Gly149–Asp152 serves as a coordination point for ATP. Gln155 contacts (R)-pantoate. ATP is bound by residues Val178 and Leu186–Arg189.

The protein belongs to the pantothenate synthetase family. In terms of assembly, homodimer.

The protein resides in the cytoplasm. The enzyme catalyses (R)-pantoate + beta-alanine + ATP = (R)-pantothenate + AMP + diphosphate + H(+). The protein operates within cofactor biosynthesis; (R)-pantothenate biosynthesis; (R)-pantothenate from (R)-pantoate and beta-alanine: step 1/1. Functionally, catalyzes the condensation of pantoate with beta-alanine in an ATP-dependent reaction via a pantoyl-adenylate intermediate. The chain is Pantothenate synthetase from Chelativorans sp. (strain BNC1).